A 1209-amino-acid polypeptide reads, in one-letter code: Putative lysine-specific demethylase JMJ16 (1209 aa).

The JmjN domain occupies 146 to 187 (APVFYPSEEEFEDTLNYIAKIRPEAEKYGICRIVPPPSWKPP). The short motif at 217 to 224 (MKKISKLP) is the Nuclear localization signal element. Positions 361–527 (KYAKSGWNLN…HGQIAIELYC (167 aa)) constitute a JmjC domain. His-407, Glu-409, and His-495 together coordinate Fe cation. The Zn(2+) site is built by Cys-617, Cys-620, Cys-631, Cys-633, Cys-640, His-643, Cys-648, and Cys-650. A C5HC2 zinc finger spans residues 617 to 667 (CCICFFDLHLSAAGCRCSPEKYSCLTHVKELCSCPWVTKYFLFRYDIDELN). The interval 872 to 900 (DTRNTISLPTNDQKTMRRDVPSSTSHAEV) is disordered. Polar residues predominate over residues 875–884 (NTISLPTNDQ). The FYR N-terminal domain occupies 974-1032 (VVRRINCNVEPLSYGCVLSGKSWCSRRAIFPKGFRSRVKYINILDPTNMCFYISEILDA). The 91-residue stretch at 1034 to 1124 (RNSPLFMVYL…RVCTDYWDSR (91 aa)) folds into the FYR C-terminal domain.

Belongs to the JARID1 histone demethylase family. In terms of assembly, interacts with MMD1 in the nucleus of male meiocytes, especially on pachytene chromosomes. Fe(2+) is required as a cofactor. As to expression, confined to inflorescences.

Its subcellular location is the nucleus. It carries out the reaction N(6),N(6),N(6)-trimethyl-L-lysyl(4)-[histone H3] + 2-oxoglutarate + O2 = N(6),N(6)-dimethyl-L-lysyl(4)-[histone H3] + formaldehyde + succinate + CO2. The catalysed reaction is N(6),N(6)-dimethyl-L-lysyl(4)-[histone H3] + 2-oxoglutarate + O2 = N(6)-methyl-L-lysyl(4)-[histone H3] + formaldehyde + succinate + CO2. The enzyme catalyses N(6)-methyl-L-lysyl(4)-[histone H3] + 2-oxoglutarate + O2 = L-lysyl(4)-[histone H3] + formaldehyde + succinate + CO2. Functionally, functions as a histone H3 'Lys-4' (H3K4me) demethylase involved in the negative regulation of gene expression. Active on H3K4me1, H3K4me2 and H3K4me3. Not active on mono-, di- and trimethylated H3K9, H3K27 and H3K36 in somatic cells. However, also active on H3K9 when in complex with MMD1, a meiocyte-specific histone reader. Together with MMD1, promotes gene expression in male meiocytes in an H3K9me3-dependent manner, and contributes to meiotic chromosome condensation by triggering some condensin promoters (e.g. CAP-D3 and CAP-H). Together with JMJ14 and JMJ17, required for plant growth and development. Represses leaf senescence in an age-dependent manner by demethylating H3K4me3 activating histone marks at senescence-associated genes (SAGs) loci, including WRKY53 and SAG201, thus preventing their premature expression. The protein is Putative lysine-specific demethylase JMJ16 of Arabidopsis thaliana (Mouse-ear cress).